We begin with the raw amino-acid sequence, 1295 residues long: Phosphoribosylformylglycinamidine synthase (1295 aa).

Positions 305 to 327 (WPGAATGSGGEIRDEGATGRGAK) are disordered. ATP contacts are provided by residues 307–318 (GAATGSGGEIRD), 386–388 (TGY), and Ala-678. Residues Asp-679, Glu-718, Asn-722, and Asp-884 each coordinate Mg(2+). Ser-886 is a binding site for ATP. The Glutamine amidotransferase type-1 domain occupies 1042–1295 (VAVLREQGVN…IFRNARKQLG (254 aa)). Cys-1135 acts as the Nucleophile in catalysis. Residues His-1260 and Glu-1262 contribute to the active site.

This sequence in the N-terminal section; belongs to the FGAMS family. As to quaternary structure, monomer.

It localises to the cytoplasm. It catalyses the reaction N(2)-formyl-N(1)-(5-phospho-beta-D-ribosyl)glycinamide + L-glutamine + ATP + H2O = 2-formamido-N(1)-(5-O-phospho-beta-D-ribosyl)acetamidine + L-glutamate + ADP + phosphate + H(+). It functions in the pathway purine metabolism; IMP biosynthesis via de novo pathway; 5-amino-1-(5-phospho-D-ribosyl)imidazole from N(2)-formyl-N(1)-(5-phospho-D-ribosyl)glycinamide: step 1/2. Phosphoribosylformylglycinamidine synthase involved in the purines biosynthetic pathway. Catalyzes the ATP-dependent conversion of formylglycinamide ribonucleotide (FGAR) and glutamine to yield formylglycinamidine ribonucleotide (FGAM) and glutamate. The chain is Phosphoribosylformylglycinamidine synthase from Salmonella typhi.